The sequence spans 264 residues: Type III pantothenate kinase (264 aa).

Residue 6-13 (DIGNTQTV) coordinates ATP. Substrate-binding positions include tyrosine 100 and 107–110 (GADR). Aspartate 109 (proton acceptor) is an active-site residue. Residue aspartate 129 coordinates K(+). ATP is bound at residue threonine 132. Threonine 185 lines the substrate pocket.

It belongs to the type III pantothenate kinase family. As to quaternary structure, homodimer. Requires NH4(+) as cofactor. It depends on K(+) as a cofactor.

It is found in the cytoplasm. It carries out the reaction (R)-pantothenate + ATP = (R)-4'-phosphopantothenate + ADP + H(+). It functions in the pathway cofactor biosynthesis; coenzyme A biosynthesis; CoA from (R)-pantothenate: step 1/5. In terms of biological role, catalyzes the phosphorylation of pantothenate (Pan), the first step in CoA biosynthesis. The sequence is that of Type III pantothenate kinase from Rubrobacter xylanophilus (strain DSM 9941 / JCM 11954 / NBRC 16129 / PRD-1).